A 382-amino-acid polypeptide reads, in one-letter code: V-type proton ATPase subunit C 1 (382 aa).

Position 2 is an N-acetylthreonine (threonine 2).

This sequence belongs to the V-ATPase C subunit family. In terms of assembly, V-ATPase is a heteromultimeric enzyme made up of two complexes: the ATP-hydrolytic V1 complex and the proton translocation V0 complex. The V1 complex consists of three catalytic AB heterodimers that form a heterohexamer, three peripheral stalks each consisting of EG heterodimers, one central rotor including subunits D and F, and the regulatory subunits C and H. The proton translocation complex V0 consists of the proton transport subunit a, a ring of proteolipid subunits c9c'', rotary subunit d, subunits e and f, and two accessory subunits.

In terms of biological role, subunit of the V1 complex of vacuolar(H+)-ATPase (V-ATPase), a multisubunit enzyme composed of a peripheral complex (V1) that hydrolyzes ATP and a membrane integral complex (V0) that translocates protons. V-ATPase is responsible for acidifying and maintaining the pH of intracellular compartments and in some cell types, is targeted to the plasma membrane, where it is responsible for acidifying the extracellular environment. Subunit C is necessary for the assembly of the catalytic sector of the enzyme and is likely to have a specific function in its catalytic activity. This chain is V-type proton ATPase subunit C 1 (atp6v1c1), found in Xenopus tropicalis (Western clawed frog).